A 306-amino-acid chain; its full sequence is Acetylglutamate kinase (306 aa).

Substrate is bound by residues 79 to 80 (GG), Arg-101, and Asn-203.

This sequence belongs to the acetylglutamate kinase family. ArgB subfamily.

It is found in the cytoplasm. It catalyses the reaction N-acetyl-L-glutamate + ATP = N-acetyl-L-glutamyl 5-phosphate + ADP. The protein operates within amino-acid biosynthesis; L-arginine biosynthesis; N(2)-acetyl-L-ornithine from L-glutamate: step 2/4. Catalyzes the ATP-dependent phosphorylation of N-acetyl-L-glutamate. In Polaromonas naphthalenivorans (strain CJ2), this protein is Acetylglutamate kinase.